Here is a 134-residue protein sequence, read N- to C-terminus: Putative pre-16S rRNA nuclease (134 aa).

This sequence belongs to the YqgF nuclease family.

It is found in the cytoplasm. Its function is as follows. Could be a nuclease involved in processing of the 5'-end of pre-16S rRNA. The sequence is that of Putative pre-16S rRNA nuclease from Helicobacter pylori (strain Shi470).